The sequence spans 475 residues: Neuronal acetylcholine receptor subunit alpha-5 (475 aa).

A signal peptide spans 1-29 (MAAPGWGRWVLGLGPLLLQVFLPFQLVAG). Topologically, residues 30–261 (RWGPEGAGGG…VIKRLPLFYT (232 aa)) are extracellular. A disulfide bond links Cys-177 and Cys-191. 2 N-linked (GlcNAc...) asparagine glycosylation sites follow: Asn-190 and Asn-236. The cysteines at positions 241 and 242 are disulfide-linked. Helical transmembrane passes span 262–282 (LFLI…FYLP), 289–309 (ICLC…IEEI), and 324–344 (LVFT…AINI). Residues 345 to 437 (HHRSSSTHDA…KFIAQVLDRM (93 aa)) are Cytoplasmic-facing. A helical transmembrane segment spans residues 438-458 (FLWTFLLVSVVGSLGLFVPVI). At 459–475 (YKWANIIVPIHIGNENK) the chain is on the extracellular side.

This sequence belongs to the ligand-gated ion channel (TC 1.A.9) family. Acetylcholine receptor (TC 1.A.9.1) subfamily. Alpha-5/CHRNA5 sub-subfamily. In terms of assembly, neuronal AChR that forms heteropentamers composed of two different type of subunits: alpha and non-alpha (beta). CHRNA5/alpha-5 subunit is only able to form functional nAChRs when co-assembled with another alpha subunit, can be combined to CHRNA4/alpha-4 or CHRNA3/alpha-3 and CHRNB4/beta-4 or CHRNB2/beta-2 to give rise to functional receptors. Interacts with LYPD6.

The protein localises to the synaptic cell membrane. It is found in the cell membrane. It carries out the reaction Ca(2+)(in) = Ca(2+)(out). The enzyme catalyses K(+)(in) = K(+)(out). It catalyses the reaction Na(+)(in) = Na(+)(out). With respect to regulation, activated by a myriad of ligands such as acetylcholine, cytisine, nicotine, choline and epibatidine. Component of neuronal acetylcholine receptors (nAChRs) that function as pentameric, ligand-gated cation channels with high calcium permeability among other activities. nAChRs are excitatory neurotrasnmitter receptors formed by a collection of nAChR subunits known to mediate synaptic transmission in the nervous system and the neuromuscular junction. Each nAchR subunit confers differential attributes to channel properties, including activation, deactivation and desensitization kinetics, pH sensitivity, cation permeability, and binding to allosteric modulators. Has an accessory rather than functional role and is only able to form functional nAChRs when co-assembled with another beta subunit. Participates in pentameric assemblies along with CHRNA3, CHRNA4, CHRNB2 and CHRNB4. Increases receptor sensitivity to acetylcholine and nicotine when associated with CHRNA4 and CHRNB2. Plays a role in nicotine addiction. In Bos taurus (Bovine), this protein is Neuronal acetylcholine receptor subunit alpha-5 (CHRNA5).